The chain runs to 881 residues: DNA mismatch repair protein MutS (881 aa).

632–639 is an ATP binding site; the sequence is GPNMGGKS.

This sequence belongs to the DNA mismatch repair MutS family.

In terms of biological role, this protein is involved in the repair of mismatches in DNA. It is possible that it carries out the mismatch recognition step. This protein has a weak ATPase activity. The protein is DNA mismatch repair protein MutS of Chelativorans sp. (strain BNC1).